Reading from the N-terminus, the 379-residue chain is Cobalt-precorrin-5B C(1)-methyltransferase (379 aa).

The protein belongs to the CbiD family.

The enzyme catalyses Co-precorrin-5B + S-adenosyl-L-methionine = Co-precorrin-6A + S-adenosyl-L-homocysteine. The protein operates within cofactor biosynthesis; adenosylcobalamin biosynthesis; cob(II)yrinate a,c-diamide from sirohydrochlorin (anaerobic route): step 6/10. Its function is as follows. Catalyzes the methylation of C-1 in cobalt-precorrin-5B to form cobalt-precorrin-6A. The protein is Cobalt-precorrin-5B C(1)-methyltransferase of Citrobacter koseri (strain ATCC BAA-895 / CDC 4225-83 / SGSC4696).